A 278-amino-acid chain; its full sequence is Deoxyribonuclease-1-like 2 (278 aa).

The N-terminal stretch at 1–21 (MGWPWAPLTAVWALGVMGATA) is a signal peptide. Catalysis depends on residues Glu-99 and His-150. A disulfide bridge links Cys-189 with Cys-225.

Belongs to the DNase I family. The cofactor is Mg(2+). It depends on Ca(2+) as a cofactor.

The protein resides in the cytoplasm. The protein localises to the secreted. Its function is as follows. Divalent cation-dependent acid DNA endonuclease involved in the breakdown of the nucleus during corneocyte formation of epidermal keratinocytes. May play an immune role by eliminating harmful DNA released into the extracellular environment by damaged epidermal cells. The protein is Deoxyribonuclease-1-like 2 (Dnase1l2) of Mus musculus (Mouse).